The sequence spans 463 residues: Glycine--tRNA ligase (463 aa).

Substrate is bound by residues Arg100 and Glu175. Residues Arg207–Glu209, Phe217–Phe222, Glu291–Leu292, and Gly335–Arg338 contribute to the ATP site. Phe222 to Glu226 lines the substrate pocket. Glu331 to Gly335 lines the substrate pocket.

It belongs to the class-II aminoacyl-tRNA synthetase family. As to quaternary structure, homodimer.

The protein resides in the cytoplasm. It carries out the reaction tRNA(Gly) + glycine + ATP = glycyl-tRNA(Gly) + AMP + diphosphate. Its function is as follows. Catalyzes the attachment of glycine to tRNA(Gly). This chain is Glycine--tRNA ligase, found in Clostridium beijerinckii (strain ATCC 51743 / NCIMB 8052) (Clostridium acetobutylicum).